The chain runs to 267 residues: MRLIIKNDSCEAGEYISQVIKKRINDYFLNRKSGDNRPFVIGLPTGSSPLPIYKRLIEMNKNKEISFQEVVTFNMDEYVGLESNHKFSYHYFMWENFFNHIDIKKENINILNGTTDNHENECKLYEEKIQSYGGIDLFLGGMGVDGHIAFNEPGSSLSSRTRIKTLTRDTIIANSRFFNNINQVPTQALTVGVGTIMDAREIILIVTGHSKAIALYRTIEEGVNHMWTASAIQMHKKSIIVCDEDATAELKVKTYKYFKQVESNSNY.

The active-site Proton acceptor; for enolization step is the Asp-76. Asp-145 acts as the For ring-opening step in catalysis. His-147 (proton acceptor; for ring-opening step) is an active-site residue. Glu-152 serves as the catalytic For ring-opening step.

This sequence belongs to the glucosamine/galactosamine-6-phosphate isomerase family. In terms of assembly, homohexamer.

The protein resides in the cytoplasm. The catalysed reaction is alpha-D-glucosamine 6-phosphate + H2O = beta-D-fructose 6-phosphate + NH4(+). It functions in the pathway nucleotide-sugar biosynthesis; UDP-N-acetyl-alpha-D-glucosamine biosynthesis; alpha-D-glucosamine 6-phosphate from D-fructose 6-phosphate: step 1/1. Catalyzes the reversible conversion of alpha-D-glucosamine 6-phosphate (GlcN-6P) into beta-D-fructose 6-phosphate (Fru-6P) and ammonium ion, a regulatory reaction step in de novo uridine diphosphate-N-acetyl-alpha-D-glucosamine (UDP-GlcNAc) biosynthesis via hexosamine pathway. The polypeptide is Glucosamine-6-phosphate deaminase (Dictyostelium discoideum (Social amoeba)).